The sequence spans 874 residues: Alanine--tRNA ligase (874 aa).

Residues histidine 562, histidine 566, cysteine 664, and histidine 668 each contribute to the Zn(2+) site.

Belongs to the class-II aminoacyl-tRNA synthetase family. The cofactor is Zn(2+).

The protein resides in the cytoplasm. It catalyses the reaction tRNA(Ala) + L-alanine + ATP = L-alanyl-tRNA(Ala) + AMP + diphosphate. In terms of biological role, catalyzes the attachment of alanine to tRNA(Ala) in a two-step reaction: alanine is first activated by ATP to form Ala-AMP and then transferred to the acceptor end of tRNA(Ala). Also edits incorrectly charged Ser-tRNA(Ala) and Gly-tRNA(Ala) via its editing domain. The chain is Alanine--tRNA ligase from Shewanella sp. (strain MR-7).